A 55-amino-acid polypeptide reads, in one-letter code: UPF0434 protein BPEN_388 (55 aa).

The protein belongs to the UPF0434 family.

The chain is UPF0434 protein BPEN_388 from Blochmanniella pennsylvanica (strain BPEN).